We begin with the raw amino-acid sequence, 117 residues long: DNA-binding protein RdgB (117 aa).

The segment at residues 82–102 is a DNA-binding region (H-T-H motif); the sequence is NHSALAKKYNVSLQWIYKIVR.

The protein belongs to the c/mor transcriptional regulatory family.

Its function is as follows. Regulates pectin lyase production in response to DNA damage. This is DNA-binding protein RdgB (rdgB) from Pectobacterium carotovorum subsp. carotovorum (Erwinia carotovora subsp. carotovora).